A 140-amino-acid polypeptide reads, in one-letter code: Large ribosomal subunit protein uL11 (140 aa).

The protein belongs to the universal ribosomal protein uL11 family. As to quaternary structure, part of the ribosomal stalk of the 50S ribosomal subunit. Interacts with L10 and the large rRNA to form the base of the stalk. L10 forms an elongated spine to which L12 dimers bind in a sequential fashion forming a multimeric L10(L12)X complex. Post-translationally, one or more lysine residues are methylated.

Functionally, forms part of the ribosomal stalk which helps the ribosome interact with GTP-bound translation factors. The sequence is that of Large ribosomal subunit protein uL11 from Dehalococcoides mccartyi (strain ATCC BAA-2100 / JCM 16839 / KCTC 5957 / BAV1).